The following is a 207-amino-acid chain: Guanylate kinase (207 aa).

The Guanylate kinase-like domain occupies 4–184 (GTLYIVSAPS…ALSDLKTIIR (181 aa)). 11-18 (APSGAGKS) contacts ATP.

It belongs to the guanylate kinase family.

Its subcellular location is the cytoplasm. The enzyme catalyses GMP + ATP = GDP + ADP. Essential for recycling GMP and indirectly, cGMP. In Yersinia pestis bv. Antiqua (strain Antiqua), this protein is Guanylate kinase.